Reading from the N-terminus, the 338-residue chain is Phosphatidate cytidylyltransferase, mitochondrial (338 aa).

The protein belongs to the TAM41 family. Mg(2+) serves as cofactor.

It localises to the mitochondrion inner membrane. The catalysed reaction is a 1,2-diacyl-sn-glycero-3-phosphate + CTP + H(+) = a CDP-1,2-diacyl-sn-glycerol + diphosphate. It functions in the pathway phospholipid metabolism; CDP-diacylglycerol biosynthesis; CDP-diacylglycerol from sn-glycerol 3-phosphate: step 3/3. In terms of biological role, catalyzes the conversion of phosphatidic acid (PA) to CDP-diacylglycerol (CDP-DAG), an essential intermediate in the synthesis of phosphatidylglycerol, cardiolipin and phosphatidylinositol. The chain is Phosphatidate cytidylyltransferase, mitochondrial (tamm41) from Danio rerio (Zebrafish).